We begin with the raw amino-acid sequence, 797 residues long: Xaa-Pro dipeptidyl-peptidase (797 aa).

Catalysis depends on charge relay system residues Ser-370, Asp-490, and His-521.

Belongs to the peptidase S15 family. Homodimer.

It is found in the cytoplasm. The enzyme catalyses Hydrolyzes Xaa-Pro-|- bonds to release unblocked, N-terminal dipeptides from substrates including Ala-Pro-|-p-nitroanilide and (sequentially) Tyr-Pro-|-Phe-Pro-|-Gly-Pro-|-Ile.. Its function is as follows. Removes N-terminal dipeptides sequentially from polypeptides having unsubstituted N-termini provided that the penultimate residue is proline. This Lacticaseibacillus paracasei (strain ATCC 334 / BCRC 17002 / CCUG 31169 / CIP 107868 / KCTC 3260 / NRRL B-441) (Lactobacillus paracasei) protein is Xaa-Pro dipeptidyl-peptidase.